The following is a 184-amino-acid chain: Probable DNA-directed RNA polymerase subunit delta (184 aa).

Residues 14-82 (KSFIDMAHTL…GENNWGLRDW (69 aa)) enclose the HTH HARE-type domain. Residues 114–184 (LLGEEEEEID…FNDDPDDDKI (71 aa)) form a disordered region. Over residues 117–184 (EEEEEIDDQE…FNDDPDDDKI (68 aa)) the composition is skewed to acidic residues.

The protein belongs to the RpoE family. RNAP is composed of a core of 2 alpha, a beta and a beta' subunits. The core is associated with a delta subunit and one of several sigma factors.

In terms of biological role, participates in both the initiation and recycling phases of transcription. In the presence of the delta subunit, RNAP displays an increased specificity of transcription, a decreased affinity for nucleic acids, and an increased efficiency of RNA synthesis because of enhanced recycling. The protein is Probable DNA-directed RNA polymerase subunit delta of Staphylococcus carnosus (strain TM300).